A 370-amino-acid polypeptide reads, in one-letter code: DNA replication and repair protein RecF (370 aa).

Residue 33–40 participates in ATP binding; it reads GPNAAGKT.

This sequence belongs to the RecF family.

Its subcellular location is the cytoplasm. Its function is as follows. The RecF protein is involved in DNA metabolism; it is required for DNA replication and normal SOS inducibility. RecF binds preferentially to single-stranded, linear DNA. It also seems to bind ATP. This Moorella thermoacetica (strain ATCC 39073 / JCM 9320) protein is DNA replication and repair protein RecF.